The chain runs to 396 residues: Ornithine aminotransferase (396 aa).

K255 bears the N6-(pyridoxal phosphate)lysine mark.

Belongs to the class-III pyridoxal-phosphate-dependent aminotransferase family. OAT subfamily. It depends on pyridoxal 5'-phosphate as a cofactor.

The protein resides in the cytoplasm. The catalysed reaction is a 2-oxocarboxylate + L-ornithine = L-glutamate 5-semialdehyde + an L-alpha-amino acid. It functions in the pathway amino-acid biosynthesis; L-proline biosynthesis; L-glutamate 5-semialdehyde from L-ornithine: step 1/1. Functionally, catalyzes the interconversion of ornithine to glutamate semialdehyde. The protein is Ornithine aminotransferase of Bacillus cereus (strain 03BB102).